The chain runs to 110 residues: Hydrogenase maturation factor HypA (110 aa).

H2 serves as a coordination point for Ni(2+). Residues C70, C73, C86, and C89 each contribute to the Zn(2+) site.

It belongs to the HypA/HybF family.

Its function is as follows. Involved in the maturation of [NiFe] hydrogenases. Required for nickel insertion into the metal center of the hydrogenase. The protein is Hydrogenase maturation factor HypA of Geobacter metallireducens (strain ATCC 53774 / DSM 7210 / GS-15).